The primary structure comprises 367 residues: Phosphoribosylaminoimidazole-succinocarboxamide synthase (367 aa).

This sequence belongs to the SAICAR synthetase family.

It catalyses the reaction 5-amino-1-(5-phospho-D-ribosyl)imidazole-4-carboxylate + L-aspartate + ATP = (2S)-2-[5-amino-1-(5-phospho-beta-D-ribosyl)imidazole-4-carboxamido]succinate + ADP + phosphate + 2 H(+). It functions in the pathway purine metabolism; IMP biosynthesis via de novo pathway; 5-amino-1-(5-phospho-D-ribosyl)imidazole-4-carboxamide from 5-amino-1-(5-phospho-D-ribosyl)imidazole-4-carboxylate: step 1/2. This is Phosphoribosylaminoimidazole-succinocarboxamide synthase from Aeromonas salmonicida (strain A449).